Reading from the N-terminus, the 1237-residue chain is Rho guanine nucleotide exchange factor 10-like protein (1237 aa).

Disordered stretches follow at residues 1–117 (MASS…SSRR) and 132–203 (YDDV…QPKM). A compositionally biased stretch (acidic residues) spans 25 to 45 (EAEDDPGEGFEFDDSDDDEDT). Serine 39 is subject to Phosphoserine. Tyrosine 132 and tyrosine 153 each carry phosphotyrosine. Basic and acidic residues-rich tracts occupy residues 146–163 (EAER…RAPQ) and 184–194 (EEAKPEAEPTK). Serine 241 is subject to Phosphoserine. The DH domain occupies 276 to 463 (VRRHILGSIV…ETLAEKLNEQ (188 aa)). Disordered stretches follow at residues 1091-1118 (QEEA…PASH) and 1142-1164 (PGPL…HSEE).

Interacts with RHOA, RHOB and RHOC.

It localises to the cytoplasm. Functionally, acts as a guanine nucleotide exchange factor (GEF) for RHOA, RHOB and RHOC. This is Rho guanine nucleotide exchange factor 10-like protein (ARHGEF10L) from Bos taurus (Bovine).